A 460-amino-acid chain; its full sequence is UDP-N-acetylmuramoyl-tripeptide--D-alanyl-D-alanine ligase (460 aa).

Position 115 to 121 (115 to 121 (GSSGKTS)) interacts with ATP.

It belongs to the MurCDEF family. MurF subfamily.

It localises to the cytoplasm. It catalyses the reaction D-alanyl-D-alanine + UDP-N-acetyl-alpha-D-muramoyl-L-alanyl-gamma-D-glutamyl-meso-2,6-diaminopimelate + ATP = UDP-N-acetyl-alpha-D-muramoyl-L-alanyl-gamma-D-glutamyl-meso-2,6-diaminopimeloyl-D-alanyl-D-alanine + ADP + phosphate + H(+). It functions in the pathway cell wall biogenesis; peptidoglycan biosynthesis. Functionally, involved in cell wall formation. Catalyzes the final step in the synthesis of UDP-N-acetylmuramoyl-pentapeptide, the precursor of murein. This is UDP-N-acetylmuramoyl-tripeptide--D-alanyl-D-alanine ligase from Buchnera aphidicola subsp. Baizongia pistaciae (strain Bp).